The primary structure comprises 105 residues: UPF0235 protein A1E_05380 (105 aa).

It belongs to the UPF0235 family.

This Rickettsia canadensis (strain McKiel) protein is UPF0235 protein A1E_05380.